We begin with the raw amino-acid sequence, 91 residues long: Antifungal protein opdH (91 aa).

Positions 1–18 (MQFSSLSLVFLAVIGAIA) are cleaved as a signal peptide. Positions 19-33 (NPIAVDSELENRDVQ) are excised as a propeptide. 3 disulfides stabilise this stretch: Cys-41-Cys-69, Cys-48-Cys-76, and Cys-61-Cys-87.

The protein belongs to the antifungal protein pafB family.

Its subcellular location is the secreted. The protein resides in the host cytoplasm. Functionally, antifungal protein; part of the gene cluster that mediates the biosynthesis of oxopyrrolidines, polyketide-amino acid hybrid compounds with feature structures of tetramic acid. Acts as an inhibitor of growth of various molds and yeasts. The chain is Antifungal protein opdH from Penicillium oxalicum (strain 114-2 / CGMCC 5302) (Penicillium decumbens).